Consider the following 330-residue polypeptide: uncharacterized protein (330 aa).

Helical transmembrane passes span 15-35 (LTLI…KGVL), 41-61 (FFVA…WAMG), 72-92 (GWGW…GFLA), 102-122 (LGSV…SWLF), 125-145 (VIGG…SLIG), 175-195 (LWML…PFVS), 201-221 (VVAT…IALV), 238-258 (LAYA…YLAS), 264-284 (SLSS…NLIL), and 286-306 (EQLS…IYLI). EamA domains follow at residues 22–146 (FLWG…LIGL) and 182–308 (LSMA…LINQ).

The protein belongs to the EamA transporter family.

The protein resides in the cell membrane. This is an uncharacterized protein from Synechocystis sp. (strain ATCC 27184 / PCC 6803 / Kazusa).